Consider the following 259-residue polypeptide: Taurine import ATP-binding protein TauB (259 aa).

One can recognise an ABC transporter domain in the interval 4–233 (LELERISAQY…RYAAGESARA (230 aa)). 38 to 45 (GPSGSGKT) lines the ATP pocket.

This sequence belongs to the ABC transporter superfamily. Taurine importer (TC 3.A.1.17.1) family. The complex is composed of two ATP-binding proteins (TauB), two transmembrane proteins (TauC) and a solute-binding protein (TauA).

The protein localises to the cell inner membrane. It catalyses the reaction taurine(out) + ATP + H2O = taurine(in) + ADP + phosphate + H(+). Part of the ABC transporter complex TauABC involved in taurine import. Responsible for energy coupling to the transport system. This Pseudomonas entomophila (strain L48) protein is Taurine import ATP-binding protein TauB.